Here is a 463-residue protein sequence, read N- to C-terminus: UDP-N-acetylmuramoylalanine--D-glutamate ligase (463 aa).

Position 109–115 (109–115 (GTDGKST)) interacts with ATP.

It belongs to the MurCDEF family.

It localises to the cytoplasm. The catalysed reaction is UDP-N-acetyl-alpha-D-muramoyl-L-alanine + D-glutamate + ATP = UDP-N-acetyl-alpha-D-muramoyl-L-alanyl-D-glutamate + ADP + phosphate + H(+). It participates in cell wall biogenesis; peptidoglycan biosynthesis. In terms of biological role, cell wall formation. Catalyzes the addition of glutamate to the nucleotide precursor UDP-N-acetylmuramoyl-L-alanine (UMA). This Leptospira interrogans serogroup Icterohaemorrhagiae serovar Lai (strain 56601) protein is UDP-N-acetylmuramoylalanine--D-glutamate ligase.